Consider the following 81-residue polypeptide: Conotoxin Eb11.3 (81 aa).

Residues M1–G23 form the signal peptide. 4 disulfides stabilise this stretch: C27/C41, C34/C48, C40/C56, and C47/C62. L69 is modified (leucine amide). A propeptide spanning residues A73–R81 is cleaved from the precursor.

It belongs to the conotoxin I2 superfamily. Expressed by the venom duct.

Its subcellular location is the secreted. The protein is Conotoxin Eb11.3 of Conus eburneus (Ivory cone).